A 118-amino-acid chain; its full sequence is Elicitin (118 aa).

An N-terminal signal peptide occupies residues 1–20; it reads MNFRALFAATVAALVGSTSA. 3 cysteine pairs are disulfide-bonded: Cys23/Cys91, Cys47/Cys76, and Cys71/Cys115.

This sequence belongs to the elicitin family.

It is found in the secreted. Functionally, induces local and distal defense responses (incompatible hypersensitive reaction) in plants from the solanaceae and cruciferae families. Elicits leaf necrosis and causes the accumulation of pathogenesis-related proteins. Might interact with the lipidic molecules of the plasma membrane. The chain is Elicitin (PARA1) from Phytophthora nicotianae (Potato buckeye rot agent).